The chain runs to 338 residues: 1-aminocyclopropane-1-carboxylate deaminase (338 aa).

At Lys51 the chain carries N6-(pyridoxal phosphate)lysine. The active-site Nucleophile is Ser78.

The protein belongs to the ACC deaminase/D-cysteine desulfhydrase family. Homotrimer. Requires pyridoxal 5'-phosphate as cofactor.

It carries out the reaction 1-aminocyclopropane-1-carboxylate + H2O = 2-oxobutanoate + NH4(+). Its function is as follows. Catalyzes a cyclopropane ring-opening reaction, the irreversible conversion of 1-aminocyclopropane-1-carboxylate (ACC) to ammonia and alpha-ketobutyrate. Allows growth on ACC as a nitrogen source. This Burkholderia ambifaria (strain MC40-6) protein is 1-aminocyclopropane-1-carboxylate deaminase.